Reading from the N-terminus, the 165-residue chain is UBA-like domain-containing protein 2-B (165 aa).

The disordered stretch occupies residues 119-165 (QQPVWLPPASPTAHLHHHHHHPQPVWPPNSQPTGGPQKAMAAMDGQR).

The protein belongs to the UBALD family.

The polypeptide is UBA-like domain-containing protein 2-B (ubald2-b) (Xenopus laevis (African clawed frog)).